Reading from the N-terminus, the 412-residue chain is MYEVTKFGGEGKRLEDYREIIGDEALEAIKAKAENLKDKSFVHVNSTSFGGGVAEILHNLVPLMRDVGIDARWFVIEGTNEFFNVTKSFHNALQGNKELRLTEEMKKLYLEINKKNAEDIDLTQFDYVLIHDPQPAPLIEFYEKRQPWIWRCHIDLSDPNLEFWKFLRQFVEKYDRYIFHMEEYVQEDLNQEKVVIMPPSIDPLSEKNMELSESEILKTLERFDVDPERPIITQVARFDPWKGVFDVIDVYRKVKEKIPEVQLLLVGVMAHDDPEGWIYFEKTLRKIGEDYDIKVLTNLTGVHAREVNAFQRASDVILQMSIREGFGLTVTEAMWKEKPVVGRAVGGIKLQIVDGKTGFLVKDVNDAIEKTLYLLEHKDVAQEMGKNAKERIKENFIITKHLERYLDLLNSF.

Belongs to the glycosyltransferase group 1 family. Glycosyltransferase 4 subfamily. As to quaternary structure, homodimer. It depends on Mg(2+) as a cofactor.

It catalyses the reaction an NDP-alpha-D-glucose + D-glucose = alpha,alpha-trehalose + a ribonucleoside 5'-diphosphate + H(+). In terms of biological role, synthesizes trehalose from ADP-glucose and glucose. Has a much lower activity toward UDP-glucose and GDP-glucose. The reaction is reversible, the equilibrium strongly favors trehalose synthesis. This chain is Trehalose synthase, found in Pyrococcus furiosus (strain ATCC 43587 / DSM 3638 / JCM 8422 / Vc1).